The following is a 337-amino-acid chain: Fructose-1,6-bisphosphatase class 1 (337 aa).

Residues E94, D116, L118, and D119 each coordinate Mg(2+). Substrate is bound by residues 119-122, N210, and K276; that span reads DGSS. E282 serves as a coordination point for Mg(2+).

The protein belongs to the FBPase class 1 family. As to quaternary structure, homotetramer. Requires Mg(2+) as cofactor.

It is found in the cytoplasm. The catalysed reaction is beta-D-fructose 1,6-bisphosphate + H2O = beta-D-fructose 6-phosphate + phosphate. It functions in the pathway carbohydrate biosynthesis; gluconeogenesis. The sequence is that of Fructose-1,6-bisphosphatase class 1 from Burkholderia orbicola (strain MC0-3).